The following is a 111-amino-acid chain: FK506-binding protein 1 (111 aa).

The tract at residues 1–20 (MGVEKTIITQGSGPSPQVGQ) is disordered. Residues 7–20 (IITQGSGPSPQVGQ) are compositionally biased toward polar residues. The PPIase FKBP-type domain occupies 19–111 (GQKVTMEYTG…IFDVELKKIG (93 aa)).

This sequence belongs to the FKBP-type PPIase family. FKBP1 subfamily.

It is found in the cytoplasm. It catalyses the reaction [protein]-peptidylproline (omega=180) = [protein]-peptidylproline (omega=0). Its activity is regulated as follows. Inhibited by both FK506 and rapamycin. In terms of biological role, PPIases accelerate the folding of proteins. It catalyzes the cis-trans isomerization of proline imidic peptide bonds in oligopeptides. This is FK506-binding protein 1 (FPR1) from Gibberella zeae (strain ATCC MYA-4620 / CBS 123657 / FGSC 9075 / NRRL 31084 / PH-1) (Wheat head blight fungus).